The primary structure comprises 78 residues: Apolipoprotein C-I (78 aa).

The signal sequence occupies residues 1–26 (MRLILWLPVLVVVLLMVLEGPAPAQG).

It belongs to the apolipoprotein C1 family.

The protein resides in the secreted. Functionally, inhibitor of lipoprotein binding to the low density lipoprotein (LDL) receptor, LDL receptor-related protein, and very low density lipoprotein (VLDL) receptor. Associates with high density lipoproteins (HDL) and the triacylglycerol-rich lipoproteins in the plasma and makes up about 10% of the protein of the VLDL and 2% of that of HDL. Appears to interfere directly with fatty acid uptake and is also the major plasma inhibitor of cholesteryl ester transfer protein (CETP). Binds free fatty acids and reduces their intracellular esterification. Modulates the interaction of APOE with beta-migrating VLDL and inhibits binding of beta-VLDL to the LDL receptor-related protein. This is Apolipoprotein C-I (APOC1) from Puma concolor (Mountain lion).